Consider the following 369-residue polypeptide: Molybdenum import ATP-binding protein ModC 1 (369 aa).

Residues 10 to 240 (KGYIEVAFNG…PALASRSEAA (231 aa)) enclose the ABC transporter domain. 42-49 (GPPGCGKT) contacts ATP. The Mop domain maps to 297–367 (ASSILNVFRA…ELCGKLGDDG (71 aa)).

The protein belongs to the ABC transporter superfamily. Molybdate importer (TC 3.A.1.8) family. In terms of assembly, the complex is composed of two ATP-binding proteins (ModC), two transmembrane proteins (ModB) and a solute-binding protein (ModA).

It localises to the cell inner membrane. The catalysed reaction is molybdate(out) + ATP + H2O = molybdate(in) + ADP + phosphate + H(+). Functionally, part of the ABC transporter complex ModABC involved in molybdenum import. Responsible for energy coupling to the transport system. The chain is Molybdenum import ATP-binding protein ModC 1 from Bradyrhizobium diazoefficiens (strain JCM 10833 / BCRC 13528 / IAM 13628 / NBRC 14792 / USDA 110).